A 451-amino-acid polypeptide reads, in one-letter code: Tubulin gamma-1 chain (451 aa).

Ser131 bears the Phosphoserine; by BRSK1 mark. A GTP-binding site is contributed by 142–148; the sequence is AGGTGSG.

This sequence belongs to the tubulin family. In terms of assembly, component of the gamma-tubulin ring complex (gTuRC) consisting of TUBGCP2, TUBGCP3, TUBGCP4, TUBGCP5 and TUBGCP6 and gamma-tubulin TUBG1 or TUBG2. TUBGCP2, TUBGCP3, TUBGCP4, TUBGCP5 and TUBGCP6 assemble in a 5:5:2:1:1 stoichiometry; each is associated with a gamma-tubulin, thereby arranging 14 gamma-tubulins in a helical manner. Gamma-tubulin at the first position is blocked by TUBGCP3 at the last position, allowing 13 protafilaments to grow into a microtubule. The gTuRC (via TUBGCP3 and TUBGCP6) interacts with ACTB and MZT1; the interactions form a luminal bridge that stabilizes the initial structure during complex assembly. The gTuRC (via TUBGCP2) interacts with MZT2A/MZT2B and CDK5RAP2 (via CM1 motif); the interactions play a role in gTuRC activation. Interacts with alpha-beta tubulin heterodimers; the interaction allows microtubules to nucleate from the gTuRC. Interacts with B9D2. Interacts with CDK5RAP2; the interaction is leading to centrosomal localization of TUBG1 and CDK5RAP2. Interacts with CIMAP3. Interacts with SAS6 and NUP62 at the centrosome. Interacts with EML3 (phosphorylated at 'Thr-881') and HAUS8. Interacts with DNM2; this interaction may participate in centrosome cohesion. Interacts with CCDC66. Phosphorylation at Ser-131 by BRSK1 regulates centrosome duplication, possibly by mediating relocation of gamma-tubulin and its associated proteins from the cytoplasm to the centrosome.

The protein localises to the cytoplasm. It is found in the cytoskeleton. The protein resides in the microtubule organizing center. Its subcellular location is the centrosome. It localises to the spindle. In terms of biological role, tubulin is the major constituent of microtubules, protein filaments consisting of alpha- and beta-tubulin heterodimers. Gamma-tubulin is a key component of the gamma-tubulin ring complex (gTuRC) which mediates microtubule nucleation. The gTuRC regulates the minus-end nucleation of alpha-beta tubulin heterodimers that grow into microtubule protafilaments, a critical step in centrosome duplication and spindle formation. In Mus musculus (Mouse), this protein is Tubulin gamma-1 chain.